The following is an 887-amino-acid chain: Pyruvate dehydrogenase E1 component (887 aa).

In terms of assembly, homodimer. Part of the PDH complex, consisting of multiple copies of pyruvate dehydrogenase (E1), dihydrolipoamide acetyltransferase (E2) and lipoamide dehydrogenase (E3). Requires thiamine diphosphate as cofactor.

The enzyme catalyses N(6)-[(R)-lipoyl]-L-lysyl-[protein] + pyruvate + H(+) = N(6)-[(R)-S(8)-acetyldihydrolipoyl]-L-lysyl-[protein] + CO2. In terms of biological role, component of the pyruvate dehydrogenase (PDH) complex, that catalyzes the overall conversion of pyruvate to acetyl-CoA and CO(2). The chain is Pyruvate dehydrogenase E1 component (aceE) from Buchnera aphidicola subsp. Baizongia pistaciae (strain Bp).